Consider the following 691-residue polypeptide: Protein phosphatase 1 regulatory subunit 37 (691 aa).

The tract at residues 1 to 43 (MEIAPQEAPPVPGADGDIEEAPAEAGSPSPASPPADGRLKAAA) is disordered. A phosphoserine mark is found at serine 50 and serine 56. LRR repeat units lie at residues 220–240 (SLAV…MLLA), 248–269 (NLRE…AQLG), 277–297 (SLQI…AYIC), 306–326 (GLVT…AFLG), and 334–354 (SLET…RHLK). Residues 460–662 (EREEKEQPPQ…PEVKGGSCGL (203 aa)) are disordered. A compositionally biased stretch (polar residues) spans 468–481 (PQLSASMPETTATE). Residues 505-523 (SDSDSDSDGEEEEEEEGER) show a composition bias toward acidic residues. At serine 561 the chain carries Phosphoserine. Pro residues-rich tracts occupy residues 584–605 (PASP…PSLP) and 620–634 (PQPP…PPLP).

This sequence belongs to the PPP1R37 family. As to quaternary structure, interacts with PPP1CA.

Functionally, inhibits phosphatase activity of protein phosphatase 1 (PP1) complexes. The chain is Protein phosphatase 1 regulatory subunit 37 (PPP1R37) from Homo sapiens (Human).